Consider the following 1355-residue polypeptide: Transcription factor MAR1 (1355 aa).

The segment at residues 23–52 is a DNA-binding region (zn(2)-C6 fungal-type); the sequence is CTICRKRKVKCDKTRPHCNQCTKTGVAHLC. 3 disordered regions span residues 586-614, 918-942, and 1221-1253; these read TTDNTRSGPPSNSNRNGSETPSVSPKDTN, SVPSSCNSSSVEDENTEEPNNLNQD, and PPISSAKNNMAWGTTPESEQGDHLTPNTTTSSL. The segment covering 589–603 has biased composition (low complexity); the sequence is NTRSGPPSNSNRNGS. Residues 604-614 show a composition bias toward polar residues; sequence ETPSVSPKDTN. Low complexity predominate over residues 918 to 927; it reads SVPSSCNSSS. A compositionally biased stretch (polar residues) spans 1225 to 1238; sequence SAKNNMAWGTTPES.

Its subcellular location is the nucleus. Its function is as follows. Transcription factor that contributes to plasma membrane sphingolipid incorporation and membrane permeability, decreasing fluconazole accumulation. Regulates 337 genes under fluconazole stress, including several related to lipid biosynthesis pathways such as RSB1, encoding a sphingoid long-chain base efflux transporter. Associates with the promoter of RSB1 in the region containing two 5'-CCCCTCC-3' motifs and increases its promoter occupancy upon fluconazole stress. This Candida glabrata (strain ATCC 2001 / BCRC 20586 / JCM 3761 / NBRC 0622 / NRRL Y-65 / CBS 138) (Yeast) protein is Transcription factor MAR1.